The following is a 478-amino-acid chain: MDKKVLIKRFSEAIEKGNAAIFAGAGLSMSQGYVSWPELLNDPATEIGLDSKKETDLVTLAQYYKNENGGSRGILNQILMDNFGEELEISENHRILASLPIETYWTTNYDHLIEKSIREAYKNPQVKKNYTQLATTNPNVDTIVYKMHGDIDDVSSTVITRDDYEKYDDDSYALFKETLKGDLLTKTFLFLGFSFTDPNLERILSDIRWVLRENQRPHYCIMRKILKENFVDSEDFFDQERYNYELTKRRLQINDLSRFSINVVEVDDYSEITDILKSIRKKYLRKTIFISGSAVDYTPFTSESKGLKFVEKLAYRLSESGYRIVSGYGLGIGNSIVSGVLKQRRNLRKNNIQDVLSLRPLPLDMPHEWRRYRENIIAESGISIFVFGNKLESGEIVTADGMIEEFELSVQNENIVVPIGFTKGASKVLFDKIQENFSDYFDDSLKSKFQALEKLDTEGEVDKKVEQIVSLINSIQED.

The Deacetylase sirtuin-type domain maps to 1 to 287; it reads MDKKVLIKRF…SIRKKYLRKT (287 aa). Residues alanine 19, aspartate 110, and histidine 148 each coordinate NAD(+). Catalysis depends on histidine 148, which acts as the Proton acceptor. Positions 288–478 are SLOG (STALD) domain; the sequence is IFISGSAVDY…VSLINSIQED (191 aa). 3'cADPR-binding residues include glycine 292, serine 293, leucine 330, arginine 373, lysine 390, glycine 401, and glutamate 405.

It belongs to the soluble Thoeris ThsA family. In terms of assembly, homotetramer in solution.

It carries out the reaction NAD(+) + H2O = ADP-D-ribose + nicotinamide + H(+). Activated by 3'cADPR. Its function is as follows. NAD(+) hydrolyzing component (NADase) of the Thoeris antiviral defense system, composed of ThsA and ThsB (maybe AS248_15445). Activated by 3' cyclic ADP-D-ribose (3'cADPR) but not its isomers 2'cADPR, cADPR and very weakly by ADPR; binds 3'cADPR better than 2'cADPR. Upon activation binds and hydrolyzes NAD(+), leading to cell death and inhibition of phage replication. The sequence is that of NAD(+) hydrolase ThsA from Enterococcus faecium (Streptococcus faecium).